A 440-amino-acid polypeptide reads, in one-letter code: Trigger factor (440 aa).

Positions 163 to 248 constitute a PPIase FKBP-type domain; sequence GDGVTVDFEG…VKKIESAHLP (86 aa).

It belongs to the FKBP-type PPIase family. Tig subfamily.

It is found in the cytoplasm. It carries out the reaction [protein]-peptidylproline (omega=180) = [protein]-peptidylproline (omega=0). Its function is as follows. Involved in protein export. Acts as a chaperone by maintaining the newly synthesized protein in an open conformation. Functions as a peptidyl-prolyl cis-trans isomerase. In Verminephrobacter eiseniae (strain EF01-2), this protein is Trigger factor.